Here is a 116-residue protein sequence, read N- to C-terminus: NADPH-dependent 7-cyano-7-deazaguanine reductase (116 aa).

C31 (thioimide intermediate) is an active-site residue. D38 acts as the Proton donor in catalysis. Substrate contacts are provided by residues 53 to 55 (VEL) and 72 to 73 (YE).

It belongs to the GTP cyclohydrolase I family. QueF type 1 subfamily.

The protein localises to the cytoplasm. It carries out the reaction 7-aminomethyl-7-carbaguanine + 2 NADP(+) = 7-cyano-7-deazaguanine + 2 NADPH + 3 H(+). Its pathway is tRNA modification; tRNA-queuosine biosynthesis. Catalyzes the NADPH-dependent reduction of 7-cyano-7-deazaguanine (preQ0) to 7-aminomethyl-7-deazaguanine (preQ1). In Chlorobium chlorochromatii (strain CaD3), this protein is NADPH-dependent 7-cyano-7-deazaguanine reductase.